The primary structure comprises 931 residues: Protocadherin gamma-A1 (931 aa).

The signal sequence occupies residues Met-1–Ala-28. 6 Cadherin domains span residues Gly-29 to Phe-133, Gln-134 to Phe-242, Thr-243 to Val-347, Thr-348 to Phe-452, His-453 to Ile-562, and Asp-570 to Ala-682. Residues Gly-29 to Tyr-692 are Extracellular-facing. Residues Asn-265, Asn-419, and Asn-545 are each glycosylated (N-linked (GlcNAc...) asparagine). An N-linked (GlcNAc...) asparagine glycan is attached at Asn-685. A helical transmembrane segment spans residues Leu-693–Ala-713. Residues His-714 to Lys-931 are Cytoplasmic-facing. Disordered stretches follow at residues Lys-801 to Asn-840 and Ala-901 to Lys-931. The segment covering Phe-805–Asn-840 has biased composition (polar residues). A compositionally biased stretch (basic residues) spans Asn-921–Lys-931.

The protein resides in the cell membrane. Potential calcium-dependent cell-adhesion protein. May be involved in the establishment and maintenance of specific neuronal connections in the brain. This Homo sapiens (Human) protein is Protocadherin gamma-A1 (PCDHGA1).